A 242-amino-acid chain; its full sequence is UPF0309 protein Oant_1457 (242 aa).

Residues 30 to 214 (AAELITAAAL…AKLVGKGDAP (185 aa)) form the SIS domain.

It belongs to the UPF0309 family.

This chain is UPF0309 protein Oant_1457, found in Brucella anthropi (strain ATCC 49188 / DSM 6882 / CCUG 24695 / JCM 21032 / LMG 3331 / NBRC 15819 / NCTC 12168 / Alc 37) (Ochrobactrum anthropi).